The sequence spans 96 residues: DNA-directed RNA polymerase subunit Rpo11 (96 aa).

The protein belongs to the archaeal Rpo11/eukaryotic RPB11/RPC19 RNA polymerase subunit family. Part of the RNA polymerase complex.

The protein resides in the cytoplasm. It catalyses the reaction RNA(n) + a ribonucleoside 5'-triphosphate = RNA(n+1) + diphosphate. Its function is as follows. DNA-dependent RNA polymerase (RNAP) catalyzes the transcription of DNA into RNA using the four ribonucleoside triphosphates as substrates. In Nanoarchaeum equitans (strain Kin4-M), this protein is DNA-directed RNA polymerase subunit Rpo11.